The sequence spans 321 residues: Beta-ketoacyl-[acyl-carrier-protein] synthase III (321 aa).

Catalysis depends on residues C114 and H248. Residues 249–253 are ACP-binding; sequence QANIR. Residue N278 is part of the active site.

It belongs to the thiolase-like superfamily. FabH family. As to quaternary structure, homodimer.

It localises to the cytoplasm. It carries out the reaction malonyl-[ACP] + acetyl-CoA + H(+) = 3-oxobutanoyl-[ACP] + CO2 + CoA. It functions in the pathway lipid metabolism; fatty acid biosynthesis. Functionally, catalyzes the condensation reaction of fatty acid synthesis by the addition to an acyl acceptor of two carbons from malonyl-ACP. Catalyzes the first condensation reaction which initiates fatty acid synthesis and may therefore play a role in governing the total rate of fatty acid production. Possesses both acetoacetyl-ACP synthase and acetyl transacylase activities. Its substrate specificity determines the biosynthesis of branched-chain and/or straight-chain of fatty acids. This Methylococcus capsulatus (strain ATCC 33009 / NCIMB 11132 / Bath) protein is Beta-ketoacyl-[acyl-carrier-protein] synthase III.